A 238-amino-acid chain; its full sequence is Endonuclease V (238 aa).

Positions 46 and 116 each coordinate Mg(2+).

This sequence belongs to the endonuclease V family. Requires Mg(2+) as cofactor.

The protein resides in the cytoplasm. It carries out the reaction Endonucleolytic cleavage at apurinic or apyrimidinic sites to products with a 5'-phosphate.. Its function is as follows. DNA repair enzyme involved in the repair of deaminated bases. Selectively cleaves double-stranded DNA at the second phosphodiester bond 3' to a deoxyinosine leaving behind the intact lesion on the nicked DNA. This is Endonuclease V from Bacillus velezensis (strain DSM 23117 / BGSC 10A6 / LMG 26770 / FZB42) (Bacillus amyloliquefaciens subsp. plantarum).